We begin with the raw amino-acid sequence, 840 residues long: Cullin-4 (840 aa).

A compositionally biased stretch (polar residues) spans 1 to 11 (MTSGAPPTIST). The disordered stretch occupies residues 1–82 (MTSGAPPTIS…TGNSSRTTAT (82 aa)). Residues 33-48 (TEAKQMRGDTENRSDG) show a composition bias toward basic and acidic residues. Over residues 69–82 (FRSQTGNSSRTTAT) the composition is skewed to polar residues. Residues 772–831 (DRQYKIDAAVVRIMKARKQLNHQTLMTELLQQLRFPVSTADIKKRLESLIEREYISRDPE) form the Cullin neddylation domain. A Glycyl lysine isopeptide (Lys-Gly) (interchain with G-Cter in NEDD8) cross-link involves residue lysine 786.

It belongs to the cullin family. Part of an E3 ubiquitin-protein ligase complex including cul-4 and ddb-1. Post-translationally, neddylated. Deneddylated via its interaction with the COP9 signalosome (CSN) complex.

It participates in protein modification; protein ubiquitination. In terms of biological role, component of cullin-based E3 ubiquitin-protein ligase complexes which mediate the ubiquitination and subsequent proteasomal degradation of target proteins. The functional specificity of the E3 ubiquitin-protein ligase complex depends on the variable substrate recognition component. In association with ddb-1 directs ubiquitination of cdt-1 during S phase and is required for restraining DNA rereplication. Probably is involved in ubiquitination of cki-1. This is Cullin-4 (cul-4) from Caenorhabditis elegans.